A 421-amino-acid chain; its full sequence is MSDPRYCAEIISVGTELLLGNILNSNAQFLAEELAQLGIPHYFQTVVGDNRDRLQSAVKIAAERSGLLIFTGGLGPTPDDLTTETLAACFETHLAERPEVITDIEAKFTRRGRVLTDNNRKQALLPVGAELLPNPSGTAPGMIRSPRSGLTLMTFPGVPAEMRRMWTETAVPWLHQNDWCRSILVSRLLRFWGISESALAEKVAPFFDLQNPTVAPYANNGEVKLRITAAAASEAEGVALIAPIEQELRAIAGRDCYGADNDSLASVVGALLHDRGQTLAVAESCTGGGLGQLITTIPGSSQWFWGGVIAYDNRVKQSLLNVSAETLAEAGAVSAVVAEQMAIGIQQRLGTTWGVSITGIAGPDGGTETKPVGLVYIGIAGPTGCFGVERRWGAERGRDWVRRLSAGEALDQLRRSLLNLT.

Belongs to the CinA family.

This chain is CinA-like protein, found in Synechococcus sp. (strain ATCC 27144 / PCC 6301 / SAUG 1402/1) (Anacystis nidulans).